Here is a 466-residue protein sequence, read N- to C-terminus: Ribulose bisphosphate carboxylase large chain (466 aa).

Position 5 is an N6,N6,N6-trimethyllysine (Lys-5). The substrate site is built by Asn-114 and Thr-164. Residue Lys-166 is the Proton acceptor of the active site. Residue Lys-168 participates in substrate binding. 3 residues coordinate Mg(2+): Lys-192, Asp-194, and Glu-195. Position 192 is an N6-carboxylysine (Lys-192). His-285 acts as the Proton acceptor in catalysis. Residues Arg-286, His-318, and Ser-370 each coordinate substrate.

The protein belongs to the RuBisCO large chain family. Type I subfamily. As to quaternary structure, heterohexadecamer of 8 large chains and 8 small chains; disulfide-linked. The disulfide link is formed within the large subunit homodimers. It depends on Mg(2+) as a cofactor. The disulfide bond which can form in the large chain dimeric partners within the hexadecamer appears to be associated with oxidative stress and protein turnover.

It is found in the plastid. It localises to the chloroplast. It catalyses the reaction 2 (2R)-3-phosphoglycerate + 2 H(+) = D-ribulose 1,5-bisphosphate + CO2 + H2O. The catalysed reaction is D-ribulose 1,5-bisphosphate + O2 = 2-phosphoglycolate + (2R)-3-phosphoglycerate + 2 H(+). Its function is as follows. RuBisCO catalyzes two reactions: the carboxylation of D-ribulose 1,5-bisphosphate, the primary event in carbon dioxide fixation, as well as the oxidative fragmentation of the pentose substrate in the photorespiration process. Both reactions occur simultaneously and in competition at the same active site. This Betula nigra (River birch) protein is Ribulose bisphosphate carboxylase large chain.